Reading from the N-terminus, the 257-residue chain is Thioredoxin-dependent peroxide reductase, mitochondrial (257 aa).

The N-terminal 62 residues, 1–62, are a transit peptide targeting the mitochondrion; sequence MAATAGRLFR…FAFSTSSSYH (62 aa). The region spanning 64–222 is the Thioredoxin domain; that stretch reads PAVTQHAPYF…TLRLVKAFQF (159 aa). The residue at position 84 (lysine 84) is an N6-succinyllysine. Lysine 92 carries the N6-acetyllysine; alternate modification. Lysine 92 is modified (N6-succinyllysine; alternate). Residue cysteine 109 is the Cysteine sulfenic acid (-SOH) intermediate of the active site. A Phosphothreonine modification is found at threonine 147.

Belongs to the peroxiredoxin family. AhpC/Prx1 subfamily. In terms of assembly, homodimer; disulfide-linked, upon oxidation. 6 homodimers assemble to form a ring-like dodecamer. Interacts with NEK6. Interacts with LRRK2. Interacts with MAP3K13. Interacts with RPS6KC1 (via PX domain). Post-translationally, phosphorylated by LRRK2; phosphorylation reduces perodixase activity. In terms of processing, the enzyme can be inactivated by further oxidation of the cysteine sulfenic acid (C(P)-SOH) to sulphinic acid (C(P)-SO2H) and sulphonic acid (C(P)-SO3H) instead of its condensation to a disulfide bond. S-palmitoylated. As to expression, predominantly expressed in adrenal cortex. Also detected in liver, renal cortex and medulla, and adrenal medulla (at protein level).

It is found in the mitochondrion matrix. The protein localises to the cytoplasm. The protein resides in the early endosome. It carries out the reaction a hydroperoxide + [thioredoxin]-dithiol = an alcohol + [thioredoxin]-disulfide + H2O. Its function is as follows. Thiol-specific peroxidase that catalyzes the reduction of hydrogen peroxide and organic hydroperoxides to water and alcohols, respectively. Plays a role in cell protection against oxidative stress by detoxifying peroxides. Acts synergistically with MAP3K13 to regulate the activation of NF-kappa-B in the cytosol. Required for the maintenance of physical strength. In Bos taurus (Bovine), this protein is Thioredoxin-dependent peroxide reductase, mitochondrial (PRDX3).